Reading from the N-terminus, the 153-residue chain is UPF0178 protein Ccel_2994 (153 aa).

It belongs to the UPF0178 family.

This Ruminiclostridium cellulolyticum (strain ATCC 35319 / DSM 5812 / JCM 6584 / H10) (Clostridium cellulolyticum) protein is UPF0178 protein Ccel_2994.